Here is a 208-residue protein sequence, read N- to C-terminus: Cytochrome c biogenesis ATP-binding export protein CcmA (208 aa).

The ABC transporter domain maps to 2 to 206 (LEAKELTCAR…IRLTAEGRDE (205 aa)). 34–41 (GPNGAGKT) serves as a coordination point for ATP.

The protein belongs to the ABC transporter superfamily. CcmA exporter (TC 3.A.1.107) family. The complex is composed of two ATP-binding proteins (CcmA) and two transmembrane proteins (CcmB).

It is found in the cell inner membrane. The enzyme catalyses heme b(in) + ATP + H2O = heme b(out) + ADP + phosphate + H(+). In terms of biological role, part of the ABC transporter complex CcmAB involved in the biogenesis of c-type cytochromes; once thought to export heme, this seems not to be the case, but its exact role is uncertain. Responsible for energy coupling to the transport system. This chain is Cytochrome c biogenesis ATP-binding export protein CcmA, found in Tatumella citrea (Pantoea citrea).